We begin with the raw amino-acid sequence, 485 residues long: 6-phosphogluconate dehydrogenase, decarboxylating (485 aa).

Residues 12-17 (GLAVMG), 35-37 (NRT), 77-79 (VKA), and N105 each bind NADP(+). Substrate contacts are provided by residues N105 and 131–133 (SGG). K186 acts as the Proton acceptor in catalysis. Substrate is bound at residue 189 to 190 (HN). E193 (proton donor) is an active-site residue. Positions 194, 263, 290, 449, and 455 each coordinate substrate.

Belongs to the 6-phosphogluconate dehydrogenase family. As to quaternary structure, homodimer.

The catalysed reaction is 6-phospho-D-gluconate + NADP(+) = D-ribulose 5-phosphate + CO2 + NADPH. It participates in carbohydrate degradation; pentose phosphate pathway; D-ribulose 5-phosphate from D-glucose 6-phosphate (oxidative stage): step 3/3. Its function is as follows. Catalyzes the oxidative decarboxylation of 6-phosphogluconate to ribulose 5-phosphate and CO(2), with concomitant reduction of NADP to NADPH. The chain is 6-phosphogluconate dehydrogenase, decarboxylating (6-PGD) from Cunninghamella elegans.